Reading from the N-terminus, the 369-residue chain is Putative transport protein YueF (369 aa).

The next 8 helical transmembrane spans lie at 13–33, 34–54, 73–93, 159–179, 213–233, 234–254, 271–291, and 316–336; these read ILFV…FQPF, IVFI…YFIF, LIYL…GPII, AVFG…FILF, DTLA…GTAC, FIGY…VMAI, VIVG…VVVI, and IILL…ILAV.

This sequence belongs to the autoinducer-2 exporter (AI-2E) (TC 2.A.86) family.

It is found in the cell membrane. This is Putative transport protein YueF (yueF) from Bacillus subtilis (strain 168).